A 503-amino-acid chain; its full sequence is Ell-associated factor Eaf (503 aa).

2 stretches are compositionally biased toward polar residues: residues 143-158 and 170-189; these read PGQQ…TNVA and ENST…SRRN. Disordered regions lie at residues 143–223 and 251–503; these read PGQQ…PAWD and NGSQ…EDDD. Serine 199 is subject to Phosphoserine. Over residues 251–264 the composition is skewed to polar residues; sequence NGSQANTSGSSTGS. Positions 281–296 are enriched in basic residues; that stretch reads GKQRQAPHHGHAKRQQ. The span at 297 to 311 shows a compositional bias: polar residues; it reads RSSPPMVQQQPNFGR. Positions 312-326 are enriched in low complexity; that stretch reads NSYNGGNNYAQQQQH. Residues 382–397 show a composition bias toward acidic residues; the sequence is DSSDSDSGSDSDDSTE. 2 stretches are compositionally biased toward low complexity: residues 415 to 435 and 484 to 497; these read MHHQ…QQQH and NDLL…SSNS.

It belongs to the EAF family.

The protein localises to the nucleus. Promotes transcriptional elongation by Su(Tpl)/ELL. Essential for development. The polypeptide is Ell-associated factor Eaf (Drosophila ananassae (Fruit fly)).